The following is a 164-amino-acid chain: Protein-export protein SecB (164 aa).

It belongs to the SecB family. As to quaternary structure, homotetramer, a dimer of dimers. One homotetramer interacts with 1 SecA dimer.

It is found in the cytoplasm. In terms of biological role, one of the proteins required for the normal export of preproteins out of the cell cytoplasm. It is a molecular chaperone that binds to a subset of precursor proteins, maintaining them in a translocation-competent state. It also specifically binds to its receptor SecA. The polypeptide is Protein-export protein SecB (Caulobacter sp. (strain K31)).